Here is a 258-residue protein sequence, read N- to C-terminus: Ribonuclease HII (258 aa).

One can recognise an RNase H type-2 domain in the interval 71–258 (QLIAGIDEVG…PIKTMVNFKS (188 aa)). 3 residues coordinate a divalent metal cation: Asp-77, Glu-78, and Asp-169.

This sequence belongs to the RNase HII family. Requires Mn(2+) as cofactor. Mg(2+) is required as a cofactor.

Its subcellular location is the cytoplasm. The catalysed reaction is Endonucleolytic cleavage to 5'-phosphomonoester.. In terms of biological role, endonuclease that specifically degrades the RNA of RNA-DNA hybrids. The polypeptide is Ribonuclease HII (rnhB) (Lactococcus lactis subsp. lactis (strain IL1403) (Streptococcus lactis)).